The following is a 338-amino-acid chain: Glycerol-3-phosphate dehydrogenase [NAD(P)+] (338 aa).

Residues S14, Y15, H35, and K109 each coordinate NADPH. 3 residues coordinate sn-glycerol 3-phosphate: K109, G138, and T140. Position 142 (A142) interacts with NADPH. Sn-glycerol 3-phosphate is bound by residues K194, D247, S257, R258, and N259. K194 acts as the Proton acceptor in catalysis. An NADPH-binding site is contributed by R258. NADPH contacts are provided by V282 and E284.

Belongs to the NAD-dependent glycerol-3-phosphate dehydrogenase family.

The protein localises to the cytoplasm. It catalyses the reaction sn-glycerol 3-phosphate + NAD(+) = dihydroxyacetone phosphate + NADH + H(+). It carries out the reaction sn-glycerol 3-phosphate + NADP(+) = dihydroxyacetone phosphate + NADPH + H(+). The protein operates within membrane lipid metabolism; glycerophospholipid metabolism. Functionally, catalyzes the reduction of the glycolytic intermediate dihydroxyacetone phosphate (DHAP) to sn-glycerol 3-phosphate (G3P), the key precursor for phospholipid synthesis. This is Glycerol-3-phosphate dehydrogenase [NAD(P)+] from Shewanella baltica (strain OS155 / ATCC BAA-1091).